Consider the following 700-residue polypeptide: Chondroitinase-AC (700 aa).

An N-terminal signal peptide occupies residues 1–22 (MKKLFVTCIVFFSILSPALLIA). Catalysis depends on residues His225, Tyr234, and Arg288. O-linked (Man...) serine glycosylation occurs at Ser328. Residues Glu405, Asp407, Asp416, and Tyr417 each coordinate Ca(2+). A glycan (O-linked (Man...) serine) is linked at Ser455.

The protein belongs to the polysaccharide lyase 8 family. As to quaternary structure, monomer. Ca(2+) is required as a cofactor.

The catalysed reaction is Eliminative degradation of polysaccharides containing 1,4-beta-D-hexosaminyl and 1,3-beta-D-glucuronosyl linkages to disaccharides containing 4-deoxy-beta-D-gluc-4-enuronosyl groups.. The sequence is that of Chondroitinase-AC (cslA) from Pedobacter heparinus (strain ATCC 13125 / DSM 2366 / CIP 104194 / JCM 7457 / NBRC 12017 / NCIMB 9290 / NRRL B-14731 / HIM 762-3).